The sequence spans 276 residues: uncharacterized protein (276 aa).

A run of 7 helical transmembrane segments spans residues 5–25 (TDLI…GMLA), 32–52 (PLVG…GFVG), 64–84 (GVIL…LLAV), 104–124 (AGLA…GLAL), 149–169 (IAVG…VLLP), 193–213 (LWVT…VMLV), and 244–264 (VGIA…GAFF).

This sequence belongs to the monovalent cation:proton antiporter 2 (CPA2) transporter (TC 2.A.37) family.

It is found in the cell membrane. This is an uncharacterized protein from Methylorubrum extorquens (Methylobacterium dichloromethanicum).